The primary structure comprises 445 residues: Histidinol dehydrogenase (445 aa).

Y138, Q199, and N222 together coordinate NAD(+). Substrate-binding residues include S245, Q267, and H270. Zn(2+) contacts are provided by Q267 and H270. Catalysis depends on proton acceptor residues E335 and H336. The substrate site is built by H336, D369, E423, and H428. D369 provides a ligand contact to Zn(2+). A Zn(2+)-binding site is contributed by H428.

It belongs to the histidinol dehydrogenase family. Requires Zn(2+) as cofactor.

The enzyme catalyses L-histidinol + 2 NAD(+) + H2O = L-histidine + 2 NADH + 3 H(+). The protein operates within amino-acid biosynthesis; L-histidine biosynthesis; L-histidine from 5-phospho-alpha-D-ribose 1-diphosphate: step 9/9. In terms of biological role, catalyzes the sequential NAD-dependent oxidations of L-histidinol to L-histidinaldehyde and then to L-histidine. The protein is Histidinol dehydrogenase of Burkholderia pseudomallei (strain 1710b).